Here is a 399-residue protein sequence, read N- to C-terminus: MSIFYSFSALRGLAMGIFSPIWILYLISKDYDFLQIGLMGAVLEIAKLIFEVPSGVFADRYGIKISIASSFFFSILTWAFFPFIDSAAICILAMIIWALSDSLISGSFETWMSRVAGEDRFGKEMMKNTQLLITFLIIGSIASGYLYSLNIYFPFLLVMVIYLLLFIWMSVFIKVPSVSETNHGDQNQHDSIKIIKESLKIIFNKKRVLLIVIAGFFTATAYDTISRYWQPFLSDLGFSEKSLGYIFALGGFTALVLLTLTIRFEKKIEKNPYLALTSLDSMGMVMTFLLSRAFRPLGIPCTAFLLAIEDIHHPIVTSYLNKFFPDSYKNTLFSLNSGVGAIGEILSGVIFGIISAAFGLSAMFVVVAVFLLIPIILYTIVPKIKDNDMKVQIEKSQQV.

10 helical membrane passes run 7–27 (FSAL…LYLI), 33–53 (FLQI…FEVP), 79–99 (AFFP…IWAL), 131–151 (LLIT…SLNI), 153–173 (FPFL…SVFI), 208–228 (VLLI…ISRY), 242–262 (SLGY…TLTI), 296–316 (PLGI…HPIV), 335–355 (LNSG…GIIS), and 357–377 (AFGL…PIIL).

The protein belongs to the major facilitator superfamily. Drug:H(+) antiporter-3 (DHA3) (TC 2.A.1.21) family.

The protein resides in the cell membrane. This is an uncharacterized protein from Bacillus subtilis (strain 168).